Consider the following 430-residue polypeptide: Adenylosuccinate synthetase (430 aa).

Residues 12-18 and 40-42 contribute to the GTP site; these read GDEGKGK and GHT. The active-site Proton acceptor is the D13. 2 residues coordinate Mg(2+): D13 and G40. IMP contacts are provided by residues 13–16, 38–41, T128, R142, Q223, T238, and R302; these read DEGK and NAGH. The active-site Proton donor is the H41. 298–304 contributes to the substrate binding site; sequence TTTGRPR. GTP contacts are provided by residues R304, 330-332, and 412-414; these read SID and SVG.

It belongs to the adenylosuccinate synthetase family. Homodimer. Mg(2+) is required as a cofactor.

Its subcellular location is the cytoplasm. The enzyme catalyses IMP + L-aspartate + GTP = N(6)-(1,2-dicarboxyethyl)-AMP + GDP + phosphate + 2 H(+). It participates in purine metabolism; AMP biosynthesis via de novo pathway; AMP from IMP: step 1/2. Its function is as follows. Plays an important role in the de novo pathway of purine nucleotide biosynthesis. Catalyzes the first committed step in the biosynthesis of AMP from IMP. The protein is Adenylosuccinate synthetase of Streptococcus pyogenes serotype M5 (strain Manfredo).